The chain runs to 954 residues: Glycine dehydrogenase (decarboxylating) (954 aa).

Residue Lys-704 is modified to N6-(pyridoxal phosphate)lysine.

Belongs to the GcvP family. The glycine cleavage system is composed of four proteins: P, T, L and H. Requires pyridoxal 5'-phosphate as cofactor.

It carries out the reaction N(6)-[(R)-lipoyl]-L-lysyl-[glycine-cleavage complex H protein] + glycine + H(+) = N(6)-[(R)-S(8)-aminomethyldihydrolipoyl]-L-lysyl-[glycine-cleavage complex H protein] + CO2. In terms of biological role, the glycine cleavage system catalyzes the degradation of glycine. The P protein binds the alpha-amino group of glycine through its pyridoxal phosphate cofactor; CO(2) is released and the remaining methylamine moiety is then transferred to the lipoamide cofactor of the H protein. This is Glycine dehydrogenase (decarboxylating) from Vibrio vulnificus (strain CMCP6).